Here is a 243-residue protein sequence, read N- to C-terminus: Uridylate kinase (243 aa).

15–18 lines the ATP pocket; the sequence is KLSG. Residues 23 to 28 are involved in allosteric activation by GTP; the sequence is GEEGFG. Gly-57 contributes to the UMP binding site. Positions 58 and 62 each coordinate ATP. UMP is bound by residues Asp-77 and 138-145; that span reads TGNPFFTT. Positions 165, 171, and 174 each coordinate ATP.

The protein belongs to the UMP kinase family. Homohexamer.

The protein resides in the cytoplasm. The catalysed reaction is UMP + ATP = UDP + ADP. The protein operates within pyrimidine metabolism; CTP biosynthesis via de novo pathway; UDP from UMP (UMPK route): step 1/1. Its activity is regulated as follows. Allosterically activated by GTP. Inhibited by UTP. Its function is as follows. Catalyzes the reversible phosphorylation of UMP to UDP. The polypeptide is Uridylate kinase (Vibrio campbellii (strain ATCC BAA-1116)).